An 858-amino-acid polypeptide reads, in one-letter code: Piwi-like protein 1 (858 aa).

Basic residues predominate over residues 1-13; sequence MTGRARARSRGRG. The tract at residues 1–56 is disordered; sequence MTGRARARSRGRGRGQEPAAPGAQPPVSQEAAKPVVSTPSEGQLVGRGRQKPAPGA. Low complexity predominate over residues 16-26; that stretch reads QEPAAPGAQPP. Residues 276–388 enclose the PAZ domain; that stretch reads TVLDFMYSLR…LVPEFCYLTG (113 aa). Positions 314-316 are required for binding 2'-O-methylated 3'-end of piRNAs; that stretch reads TYR. Positions 476–612 are MID region; it reads SKEMRGLPLI…LQMNCKMGGE (137 aa). In terms of domain architecture, Piwi spans 552–844; the sequence is MVVVILPTNR…LAFLVGQSIH (293 aa). Catalysis depends on residues Asp-629, Glu-667, Asp-699, and His-833.

It belongs to the argonaute family. Piwi subfamily. Requires Mg(2+) as cofactor. In terms of processing, methylated on arginine residues; required for the interaction with Tudor domain-containing protein and subsequent localization to the meiotic nuage, also named P granule. Expressed exclusively in the adult gonads; expression in the ovary weaker than in the testis (at protein level). During neurogenesis and organogenesis, expression is detected in CNS (midbrain and eye) and fin buds. Starting from 24 hours post-fertilization, expression is found in the genital ridge.

The protein resides in the cytoplasm. Plays a central role during gametogenesis by repressing transposable elements and preventing their mobilization, which is essential for the germline integrity. Acts via the piRNA metabolic process, which mediates the repression of transposable elements during meiosis by forming complexes composed of piRNAs and Piwi proteins and governs the methylation and subsequent repression of transposons. Directly binds methylated piRNAs, a class of 24 to 30 nucleotide RNAs that are generated by a Dicer-independent mechanism and are primarily derived from transposons and other repeated sequence elements. Has a strong preference for piRNAs with a uridine nucleotide at their 5'-end (g1U preference, also named 1U-bias) and binds piRNAs in an opposite direction compared to piwil2/zili. Participates in a piRNA amplification loop with piwil2/zili. Not involved in the piRNA amplification loop, also named ping-pong amplification cycle. Acts as an endoribonuclease that cleaves transposon messenger RNAs. This Danio rerio (Zebrafish) protein is Piwi-like protein 1 (piwil1).